Consider the following 145-residue polypeptide: Large ribosomal subunit protein uL11 (145 aa).

The protein belongs to the universal ribosomal protein uL11 family. In terms of assembly, part of the ribosomal stalk of the 50S ribosomal subunit. Interacts with L10 and the large rRNA to form the base of the stalk. L10 forms an elongated spine to which L12 dimers bind in a sequential fashion forming a multimeric L10(L12)X complex. In terms of processing, one or more lysine residues are methylated.

Forms part of the ribosomal stalk which helps the ribosome interact with GTP-bound translation factors. The polypeptide is Large ribosomal subunit protein uL11 (Flavobacterium johnsoniae (strain ATCC 17061 / DSM 2064 / JCM 8514 / BCRC 14874 / CCUG 350202 / NBRC 14942 / NCIMB 11054 / UW101) (Cytophaga johnsonae)).